The primary structure comprises 461 residues: LL-diaminopimelate aminotransferase, chloroplastic (461 aa).

A chloroplast-targeting transit peptide spans 1 to 45; sequence MSSTHQLVSSMISSSSSTFLAPSNFNLRTRNACLPMAKRVNTCKC. Residues Tyr-72 and Gly-99 each contribute to the substrate site. Pyridoxal 5'-phosphate is bound by residues Tyr-129, 163–164, Tyr-187, Asn-244, Tyr-275, and 302–304; these read AK and SFS. Positions 164, 187, and 244 each coordinate substrate. At Lys-305 the chain carries N6-(pyridoxal phosphate)lysine. Residues Arg-313 and Asn-344 each coordinate pyridoxal 5'-phosphate. Positions 344 and 439 each coordinate substrate.

Belongs to the class-I pyridoxal-phosphate-dependent aminotransferase family. LL-diaminopimelate aminotransferase subfamily. In terms of assembly, homodimer. Requires pyridoxal 5'-phosphate as cofactor. Highly expressed in seedlings, roots, stems, flowers and leaves. Lower expression in siliques.

It is found in the plastid. The protein resides in the chloroplast. It catalyses the reaction (2S,6S)-2,6-diaminopimelate + 2-oxoglutarate = (S)-2,3,4,5-tetrahydrodipicolinate + L-glutamate + H2O + H(+). The protein operates within amino-acid biosynthesis; L-lysine biosynthesis via DAP pathway; LL-2,6-diaminopimelate from (S)-tetrahydrodipicolinate (aminotransferase route): step 1/1. Functionally, required for lysine biosynthesis. Catalyzes the direct conversion of tetrahydrodipicolinate to LL-diaminopimelate, a reaction that requires three enzymes in E.coli. Not active with meso-diaminopimelate, lysine or ornithine as substrates. The polypeptide is LL-diaminopimelate aminotransferase, chloroplastic (DAP) (Arabidopsis thaliana (Mouse-ear cress)).